Reading from the N-terminus, the 394-residue chain is MKKLLKSVLVFAALSSASSLQALPVGNPAEPSLMIDGILWEGFGGDPCDPCTTWVDAISMRMGYYGDFVFDRVLKTDVNKEFQMGAKPTTTTGNAVAPSTLTARENPAYGRHMQDAEMFTNAACMALNIWDRFDVFCTLGASSGYLKGNSASFNLVGLFGNNENQTKVSNGAFVPNMSLDQSVVELYTDTAFAWSVGARAALWECGCATLGASFQYAQSKPKVEELNVLCNAAEFTINKPKGYVGKELPLDLTAGTDAATGTKDASIDYHEWQASLALSYRLNMFTPYIGVKWSRASFDADTIRIAQPKSAETIFDVTTLNPTIAGAGDVKTSAEGQLGDTMQIVSLQLNKMKSRKSCGIAVGTTIVDADKYAVTVETRLIDERAAHVNAQFRF.

The N-terminal stretch at 1-22 (MKKLLKSVLVFAALSSASSLQA) is a signal peptide.

This sequence belongs to the chlamydial porin (CP) (TC 1.B.2) family. In terms of assembly, part of a disulfide cross-linked outer membrane complex (COMC) composed of the major outer membrane porin (MOMP), the small cysteine-rich protein (OmcA) and the large cysteine-rich periplasmic protein (OmcB).

Its subcellular location is the cell outer membrane. Functionally, in elementary bodies (EBs, the infectious stage, which is able to survive outside the host cell) provides the structural integrity of the outer envelope through disulfide cross-links with the small cysteine-rich protein and the large cysteine-rich periplasmic protein. It has been described in publications as the Sarkosyl-insoluble COMC (Chlamydia outer membrane complex), and serves as the functional equivalent of peptidoglycan. In terms of biological role, permits diffusion of specific solutes through the outer membrane. The sequence is that of Major outer membrane porin, serovar B (ompA) from Chlamydia trachomatis.